Consider the following 348-residue polypeptide: Guanine nucleotide-binding protein alpha-13 subunit (348 aa).

G2 carries N-myristoyl glycine lipidation. A lipid anchor (S-palmitoyl cysteine) is attached at C3. A G-alpha domain is found at 34-348; that stretch reads SHIRLLLLGS…VFKDIAKRKK (315 aa). The interval 37 to 50 is G1 motif; it reads RLLLLGSAESGKTT. GTP is bound by residues 42-49, 176-182, 201-205, 270-273, and A326; these read GSAESGKT, IMAYVPT, DIGGQ, and NEID. The interval 174-182 is G2 motif; it reads DLIMAYVPT. A Mg(2+)-binding site is contributed by T182. A G3 motif region spans residues 197–206; sequence FQLFDIGGQK. The tract at residues 266 to 273 is G4 motif; sequence YLFLNEID. The interval 324–329 is G5 motif; it reads CIAIDT.

Belongs to the G-alpha family. G proteins are composed of 3 units; alpha, beta and gamma. The alpha chain contains the guanine nucleotide binding site.

Guanine nucleotide-binding proteins (G proteins) are involved as modulators or transducers in various transmembrane signaling systems. The polypeptide is Guanine nucleotide-binding protein alpha-13 subunit (gpa-13) (Caenorhabditis elegans).